The chain runs to 273 residues: Tyrosinase (273 aa).

An N-terminal signal peptide occupies residues 1 to 18 (MCLLALGFLLGILQPASG). N-linked (GlcNAc...) asparagine glycosylation is found at asparagine 86 and asparagine 169. Residues histidine 180, histidine 202, and histidine 211 each contribute to the Cu cation site. Asparagine 230 carries N-linked (GlcNAc...) asparagine glycosylation.

The protein belongs to the tyrosinase family. Cu(2+) is required as a cofactor.

It is found in the melanosome membrane. It carries out the reaction 2 L-dopa + O2 = 2 L-dopaquinone + 2 H2O. The enzyme catalyses L-tyrosine + O2 = L-dopaquinone + H2O. Functionally, this is a copper-containing oxidase that functions in the formation of pigments such as melanins and other polyphenolic compounds. In Pelodiscus sinensis (Chinese softshell turtle), this protein is Tyrosinase (TYR).